Reading from the N-terminus, the 490-residue chain is MFSIINPSDDFWTKDKYIMLTIKGPMEWEAEIPGISTDFFCKFSNVSVPHFRDMHSPGAPDIKWITACTKMIDVILNYWNNKTAVPTPAKWYAQAENKAGRPSLILLIALDGIPSATIGKHTTEIRGVLIKDFFDGNAPKIDDWCTYAKTKKNGGGTQVFSLSYIPFALLQIIRPQFQWAWTNINELGDVCDEIHRKHIISHFNKKPNVKLMLFPKDGINGISLKSKFLGTIEWLSDLGIVTEDAWIRRDIRSYMQLLTLTHGDVLIHRALSIAKKRIRATRKAIDFIAHIDTDFQIYENPVYQLFCLQSFDPILAGTILYQWLSHRGGKKNTVSFIGPPGCGKSMLTGAILENIPLHGILHGSLNTKNLRAYGQVLVLWWKDISINFDNFNIIKSLLGGQKIIFPINENDHVQIGPCPIIATSCVDIRSMVHSNLHKINLSQRVYNFTFDKVIPRNFPVIQKDDINQFLFWARNRSINCFIDYTVPKIL.

The PV NS1-Nuc domain occupies 1-210; sequence MFSIINPSDD…SHFNKKPNVK (210 aa).

It localises to the host nucleus. The protein is Protein U94 (U94) of Human herpesvirus 6A (strain Uganda-1102) (HHV-6 variant A).